We begin with the raw amino-acid sequence, 252 residues long: Ribose-5-phosphate isomerase (252 aa).

This sequence belongs to the ribose 5-phosphate isomerase family.

The protein localises to the cytoplasm. It catalyses the reaction aldehydo-D-ribose 5-phosphate = D-ribulose 5-phosphate. It functions in the pathway carbohydrate degradation; pentose phosphate pathway; D-ribose 5-phosphate from D-ribulose 5-phosphate (non-oxidative stage): step 1/1. In Debaryomyces hansenii (strain ATCC 36239 / CBS 767 / BCRC 21394 / JCM 1990 / NBRC 0083 / IGC 2968) (Yeast), this protein is Ribose-5-phosphate isomerase (RKI1).